The sequence spans 247 residues: Ribosomal RNA large subunit methyltransferase E (247 aa).

The tract at residues 1 to 21 (MKKTTKKTAGGYGGSGSHKLY) is disordered. Positions 88, 90, 111, 127, and 151 each coordinate S-adenosyl-L-methionine. Lysine 191 acts as the Proton acceptor in catalysis.

It belongs to the class I-like SAM-binding methyltransferase superfamily. RNA methyltransferase RlmE family.

Its subcellular location is the cytoplasm. The enzyme catalyses uridine(2552) in 23S rRNA + S-adenosyl-L-methionine = 2'-O-methyluridine(2552) in 23S rRNA + S-adenosyl-L-homocysteine + H(+). Functionally, specifically methylates the uridine in position 2552 of 23S rRNA at the 2'-O position of the ribose in the fully assembled 50S ribosomal subunit. The chain is Ribosomal RNA large subunit methyltransferase E from Bartonella henselae (strain ATCC 49882 / DSM 28221 / CCUG 30454 / Houston 1) (Rochalimaea henselae).